A 507-amino-acid polypeptide reads, in one-letter code: AMSH-like ubiquitin thioesterase 3 (507 aa).

Residues 73-107 are a coiled coil; it reads QERLGSRKRLRAVINELESLKPEFNQLVDKLNRVE. 2 disordered regions span residues 133 to 162 and 214 to 242; these read HKAS…LTSS and PSNT…LNGD. Polar residues-rich tracts occupy residues 146-162, 214-224, and 232-242; these read LPTS…LTSS, PSNTDWGSADN, and PSSSSASLNGD. One can recognise an MPN domain in the interval 333–463; the sequence is LHVPVRIMDD…IFHLSDPSGV (131 aa). Zn(2+) contacts are provided by H411, H413, D424, H426, C469, H475, and H477. Positions 411–424 match the JAMM motif motif; it reads HTHPTQTCFMSSVD.

Belongs to the peptidase M67C family. Interacts with PATL1 and PATL2. May also bind to HSC70-1, HSC70-3, VHA-A, BGLU23 and EPSIN1. Interacts with BRO1/ALIX. Zn(2+) serves as cofactor.

It is found in the membrane. The protein localises to the cytoplasm. Its subcellular location is the vacuole membrane. The protein resides in the late endosome. Zinc metalloprotease that cleaves 'Lys-48'- and 'Lys-63'-linked polyubiquitin chains, but is not implicated in protein degradation by the 26S proteasome, deneddylation, or desumoylation. Required for intracellular trafficking (e.g. trafficking from the Golgi to the vacuole and the vacuolar trafficking of endocytosed cargo), endocytosis and vacuole biogenesis. This is AMSH-like ubiquitin thioesterase 3 (AMSH3) from Arabidopsis thaliana (Mouse-ear cress).